The primary structure comprises 224 residues: Flagellar L-ring protein (224 aa).

A signal peptide spans 1–15 (MRSLLFSLTALVLAG). Residue C16 is the site of N-palmitoyl cysteine attachment. The S-diacylglycerol cysteine moiety is linked to residue C16.

Belongs to the FlgH family. In terms of assembly, the basal body constitutes a major portion of the flagellar organelle and consists of four rings (L,P,S, and M) mounted on a central rod.

It localises to the cell outer membrane. It is found in the bacterial flagellum basal body. Its function is as follows. Assembles around the rod to form the L-ring and probably protects the motor/basal body from shearing forces during rotation. The sequence is that of Flagellar L-ring protein from Idiomarina loihiensis (strain ATCC BAA-735 / DSM 15497 / L2-TR).